Here is a 944-residue protein sequence, read N- to C-terminus: Thyroid peroxidase (944 aa).

A signal peptide spans 1–30 (MVGLVPAGSAWGGRALAVLGVTLLVALARG). Residues 31–858 (LLPFFLGGRD…SGRLPKASLV (828 aa)) are Extracellular-facing. N-linked (GlcNAc...) asparagine glycosylation is present at asparagine 141. Cysteine 154 and cysteine 170 are disulfide-bonded. Aspartate 250 is a binding site for heme b. Catalysis depends on histidine 251, which acts as the Proton acceptor. Aspartate 252 contributes to the Ca(2+) binding site. Disulfide bonds link cysteine 271/cysteine 281 and cysteine 275/cysteine 295. Asparagine 316 carries an N-linked (GlcNAc...) asparagine glycan. Residues threonine 330, phenylalanine 332, aspartate 334, and serine 336 each coordinate Ca(2+). The N-linked (GlcNAc...) asparagine glycan is linked to asparagine 351. Residues glutamate 408 and histidine 503 each contribute to the heme b site. Disulfide bonds link cysteine 606–cysteine 663, cysteine 704–cysteine 729, cysteine 750–cysteine 790, cysteine 776–cysteine 802, cysteine 808–cysteine 822, cysteine 816–cysteine 831, and cysteine 833–cysteine 846. Asparagine 623 carries an N-linked (GlcNAc...) asparagine glycan. The region spanning 748–804 (DACGLPDSLDNGDVVLCGEAGRRVLVFSCRHGFKLQGPEQVACSPRGGAVRAPVCRD) is the Sushi domain. The EGF-like; calcium-binding domain maps to 804–847 (DINECEDASHPPCHGSARCRNTKGGFRCECTDPAVLGEDGTTCV). A helical membrane pass occupies residues 859–879 (SIALGIVLVVGLAGLTWTLVC). Residues 880 to 944 (RWAHAGRKAS…RSHVAQGSPA (65 aa)) are Cytoplasmic-facing. Residues 895–944 (LGGRGAPPPGRGAGQDGASGSLVPPLGPQGRTRAVDPTSSRSHVAQGSPA) are disordered. The segment covering 931–944 (PTSSRSHVAQGSPA) has biased composition (polar residues).

Belongs to the peroxidase family. XPO subfamily. Interacts with DUOX1, DUOX2 and CYBA. Ca(2+) serves as cofactor. The cofactor is heme b. Post-translationally, heme is covalently bound through a H(2)O(2)-dependent autocatalytic process. Heme insertion is important for the delivery of protein at the cell surface. Cleaved in its N-terminal part.

The protein resides in the membrane. It carries out the reaction 2 iodide + H2O2 + 2 H(+) = diiodine + 2 H2O. The catalysed reaction is [thyroglobulin]-L-tyrosine + iodide + H2O2 + H(+) = [thyroglobulin]-3-iodo-L-tyrosine + 2 H2O. The enzyme catalyses [thyroglobulin]-3-iodo-L-tyrosine + iodide + H2O2 + H(+) = [thyroglobulin]-3,5-diiodo-L-tyrosine + 2 H2O. It catalyses the reaction 2 [thyroglobulin]-3,5-diiodo-L-tyrosine + H2O2 = [thyroglobulin]-L-thyroxine + [thyroglobulin]-dehydroalanine + 2 H2O. It carries out the reaction [thyroglobulin]-3-iodo-L-tyrosine + [thyroglobulin]-3,5-diiodo-L-tyrosine + H2O2 = [thyroglobulin]-3,3',5-triiodo-L-thyronine + [thyroglobulin]-dehydroalanine + 2 H2O. It participates in hormone biosynthesis; thyroid hormone biosynthesis. In terms of biological role, iodination and coupling of the hormonogenic tyrosines in thyroglobulin to yield the thyroid hormones T(3) and T(4). This is Thyroid peroxidase (TPO) from Canis lupus familiaris (Dog).